A 71-amino-acid polypeptide reads, in one-letter code: Cell division protein FtsB (71 aa).

At 1-3 (MKI) the chain is on the cytoplasmic side. A helical membrane pass occupies residues 4–21 (LKIFLLSLLFWLQYSLWF). Topologically, residues 22 to 71 (GKNGVLDFIKIYRRVTIEKKNNEYLDMRNNQIILEIENFNNHINKDKKKT) are extracellular.

The protein belongs to the FtsB family.

It localises to the cell membrane. Functionally, essential cell division protein. May link together the upstream cell division proteins, which are predominantly cytoplasmic, with the downstream cell division proteins, which are predominantly extracellular. This chain is Cell division protein FtsB, found in Buchnera aphidicola subsp. Acyrthosiphon pisum (strain APS) (Acyrthosiphon pisum symbiotic bacterium).